A 223-amino-acid chain; its full sequence is 7-cyano-7-deazaguanine synthase (223 aa).

15–25 (FSGGQDSTTCL) lines the ATP pocket. Residues cysteine 191, cysteine 200, cysteine 203, and cysteine 206 each coordinate Zn(2+).

It belongs to the QueC family. Homodimer. The cofactor is Zn(2+).

The enzyme catalyses 7-carboxy-7-deazaguanine + NH4(+) + ATP = 7-cyano-7-deazaguanine + ADP + phosphate + H2O + H(+). Its pathway is purine metabolism; 7-cyano-7-deazaguanine biosynthesis. Its function is as follows. Catalyzes the ATP-dependent conversion of 7-carboxy-7-deazaguanine (CDG) to 7-cyano-7-deazaguanine (preQ(0)). The polypeptide is 7-cyano-7-deazaguanine synthase (Staphylococcus epidermidis (strain ATCC 35984 / DSM 28319 / BCRC 17069 / CCUG 31568 / BM 3577 / RP62A)).